The following is a 118-amino-acid chain: Ribonuclease P protein component 2 (118 aa).

The protein belongs to the eukaryotic/archaeal RNase P protein component 2 family. In terms of assembly, consists of a catalytic RNA component and at least 4-5 protein subunits.

It localises to the cytoplasm. The enzyme catalyses Endonucleolytic cleavage of RNA, removing 5'-extranucleotides from tRNA precursor.. Its function is as follows. Part of ribonuclease P, a protein complex that generates mature tRNA molecules by cleaving their 5'-ends. This chain is Ribonuclease P protein component 2, found in Pyrococcus abyssi (strain GE5 / Orsay).